A 92-amino-acid chain; its full sequence is Small ribosomal subunit protein uS19 (92 aa).

The protein belongs to the universal ribosomal protein uS19 family.

Functionally, protein S19 forms a complex with S13 that binds strongly to the 16S ribosomal RNA. The sequence is that of Small ribosomal subunit protein uS19 from Geobacillus sp. (strain WCH70).